The sequence spans 259 residues: UPF0246 protein SG0407 (259 aa).

The protein belongs to the UPF0246 family.

The protein is UPF0246 protein SG0407 of Sodalis glossinidius (strain morsitans).